A 309-amino-acid chain; its full sequence is Serine/threonine-protein phosphatase 2A catalytic subunit alpha isoform (309 aa).

Positions 57, 59, 85, and 117 each coordinate Mn(2+). 3 residues coordinate Zn(2+): Asp-57, His-59, and Asp-85. 2 residues coordinate Fe(3+): Asp-85 and Asn-117. His-118 serves as the catalytic Proton donor. 2 residues coordinate Mn(2+): His-167 and His-241. 2 residues coordinate Fe(3+): His-167 and His-241. At Tyr-307 the chain carries Phosphotyrosine. Residue Leu-309 is modified to Leucine methyl ester.

It belongs to the PPP phosphatase family. PP-1 subfamily. In terms of assembly, PP2A consists of a common heterodimeric core enzyme composed of PPP2CA, a 36 kDa catalytic subunit (subunit C), and PPP2R1A, a 65 kDa constant regulatory subunit (PR65 or subunit A), that associates with a variety of regulatory subunits. Proteins that associate with the core dimer include three families of regulatory subunits B (the R2/B/PR55/B55, R3/B''/PR72/PR130/PR59 and R5/B'/B56 families), the 48 kDa variable regulatory subunit, viral proteins, and cell signaling molecules. Interacts with the PP2A A subunit PPP2R1A. Interacts with the regulatory subunit PPP2R2A. Interacts (via C-terminus) with PTPA. Interacts with NXN; the interaction is direct. Interacts with KCTD20. Interacts with BTBD10. Interacts with SGO1 and SGO2. Interacts with RAF1. Interaction with IGBP1 protects unassembled PPP2CA from degradative ubiquitination. Interacts with GSK3B (via C2 domain). Interacts with MFHAS1; retains PPP2CA into the cytoplasm and excludes it from the nucleus. Interacts with PABIR1/FAM122A. Interacts with ADCY8; interaction is phosphatase activity-dependent; antagonizes interaction between ADCY8 and calmodulin. Interacts with CRTC3 (when phosphorylated at 'Ser-391'). Interacts with SPRY2; the interaction is inhibited by TESK1 interaction with SPRY2, possibly by vesicular sequestration of SPRY2. Interacts with TRAF3IP3. Interacts with AMBRA1 (via PxP motifs); enhancing interaction between PPP2CA and MYC or FOXO3. Forms a complex with AMBRA1 and BECN1; AMBRA1 and BECN1 components of the complex regulate MYC stability via different pathways. Part of the core of STRIPAK complexes composed of PP2A catalytic and scaffolding subunits, the striatins (PP2A regulatory subunits), the striatin-associated proteins MOB4, STRIP1 and STRIP2, PDCD10 and members of the STE20 kinases, such as STK24 and STK26. Phosphatase component of the Integrator-PP2A (INTAC) complex, composed of the Integrator core complex and protein phosphatase 2A subunits PPP2CA and PPP2R1A. Mn(2+) serves as cofactor. It depends on Fe(3+) as a cofactor. Zn(2+) is required as a cofactor. In terms of processing, reversibly methyl esterified on Leu-309 by leucine carboxyl methyltransferase 1 (Lcmt1) and protein phosphatase methylesterase 1 (Ppme1). Carboxyl methylation influences the affinity of the catalytic subunit for the different regulatory subunits, thereby modulating the PP2A holoenzyme's substrate specificity, enzyme activity and cellular localization. Post-translationally, phosphorylation of either threonine (by autophosphorylation-activated protein kinase) or tyrosine results in inactivation of the phosphatase. Auto-dephosphorylation has been suggested as a mechanism for reactivation. Polyubiquitinated, leading to its degradation by the proteasome.

It is found in the cytoplasm. It localises to the nucleus. Its subcellular location is the chromosome. The protein resides in the centromere. The protein localises to the cytoskeleton. It is found in the spindle pole. The enzyme catalyses O-phospho-L-seryl-[protein] + H2O = L-seryl-[protein] + phosphate. It catalyses the reaction O-phospho-L-threonyl-[protein] + H2O = L-threonyl-[protein] + phosphate. With respect to regulation, inhibited by the interaction between PPP2R2A and ARPP19; this inhibition is enhanced when ARPP19 is phosphorylated. Inhibited by the interaction between PPP2R2A and PABIR1/FAM122A. Its function is as follows. Catalytic subunit of protein phosphatase 2A (PP2A), a serine/threonine phosphatase involved in the regulation of a wide variety of enzymes, signal transduction pathways, and cellular events. PP2A is the major phosphatase for microtubule-associated proteins (MAPs). PP2A can modulate the activity of phosphorylase B kinase casein kinase 2, mitogen-stimulated S6 kinase, and MAP-2 kinase. Cooperates with SGO2 to protect centromeric cohesin from separase-mediated cleavage in oocytes specifically during meiosis I. Can dephosphorylate various proteins, such as AXIN1, p53/TP53, PIM3, WEE1. Activates RAF1 by dephosphorylating it at 'Ser-259'. Mediates dephosphorylation of WEE1, preventing its ubiquitin-mediated proteolysis, increasing WEE1 protein levels, and promoting the G2/M checkpoint. Mediates dephosphorylation of MYC; promoting its ubiquitin-mediated proteolysis: interaction with AMBRA1 enhances interaction between PPP2CA and MYC. Mediates dephosphorylation of FOXO3; promoting its stabilization: interaction with AMBRA1 enhances interaction between PPP2CA and FOXO3. Catalyzes dephosphorylation of the pyrin domain of NLRP3, promoting assembly of the NLRP3 inflammasome. Together with RACK1 adapter, mediates dephosphorylation of AKT1 at 'Ser-473', preventing AKT1 activation and AKT-mTOR signaling pathway. Dephosphorylation of AKT1 is essential for regulatory T-cells (Treg) homeostasis and stability. Catalyzes dephosphorylation of PIM3, promotinh PIM3 ubiquitination and proteasomal degradation. Part of the striatin-interacting phosphatase and kinase (STRIPAK) complexes. STRIPAK complexes have critical roles in protein (de)phosphorylation and are regulators of multiple signaling pathways including Hippo, MAPK, nuclear receptor and cytoskeleton remodeling. Different types of STRIPAK complexes are involved in a variety of biological processes such as cell growth, differentiation, apoptosis, metabolism and immune regulation. Key mediator of a quality checkpoint during transcription elongation as part of the Integrator-PP2A (INTAC) complex. The INTAC complex drives premature transcription termination of transcripts that are unfavorably configured for transcriptional elongation: within the INTAC complex, PPP2CA catalyzes dephosphorylation of the C-terminal domain (CTD) of Pol II subunit POLR2A/RPB1 and SUPT5H/SPT5, thereby preventing transcriptional elongation. The protein is Serine/threonine-protein phosphatase 2A catalytic subunit alpha isoform (Ppp2ca) of Rattus norvegicus (Rat).